We begin with the raw amino-acid sequence, 388 residues long: Succinate--CoA ligase [ADP-forming] subunit beta (388 aa).

In terms of domain architecture, ATP-grasp spans 9–244 (KEIFARYGLP…PTQESELEVK (236 aa)). ATP-binding positions include Lys46, 53-55 (GRG), Glu99, Thr102, and Glu107. Asn199 and Asp213 together coordinate Mg(2+). Substrate contacts are provided by residues Asn264 and 321-323 (GIL).

It belongs to the succinate/malate CoA ligase beta subunit family. As to quaternary structure, heterotetramer of two alpha and two beta subunits. It depends on Mg(2+) as a cofactor.

It carries out the reaction succinate + ATP + CoA = succinyl-CoA + ADP + phosphate. It catalyses the reaction GTP + succinate + CoA = succinyl-CoA + GDP + phosphate. The protein operates within carbohydrate metabolism; tricarboxylic acid cycle; succinate from succinyl-CoA (ligase route): step 1/1. Its function is as follows. Succinyl-CoA synthetase functions in the citric acid cycle (TCA), coupling the hydrolysis of succinyl-CoA to the synthesis of either ATP or GTP and thus represents the only step of substrate-level phosphorylation in the TCA. The beta subunit provides nucleotide specificity of the enzyme and binds the substrate succinate, while the binding sites for coenzyme A and phosphate are found in the alpha subunit. The polypeptide is Succinate--CoA ligase [ADP-forming] subunit beta (Persephonella marina (strain DSM 14350 / EX-H1)).